The primary structure comprises 362 residues: C-C chemokine receptor type 10 (362 aa).

The Extracellular segment spans residues 1–48 (MGTKPTEQVSWGLYSGYDEEAYSVGPLPELCYKADVQAFSRAFQPSVS). A helical membrane pass occupies residues 49–69 (LMVAVLGLAGNGLVLATHLAA). The Cytoplasmic portion of the chain corresponds to 70–80 (RRTTRSPTSVH). The helical transmembrane segment at 81–101 (LLQLALADLLLALTLPFAAAG) threads the bilayer. At 102–115 (ALQGWNLGSTTCRA) the chain is on the extracellular side. A disulfide bond links Cys113 and Cys191. A helical transmembrane segment spans residues 116 to 136 (ISGLYSASFHAGFLFLACISA). Residues 137-159 (DRYVAIARALPAGQRPSTPSRAH) lie on the Cytoplasmic side of the membrane. The chain crosses the membrane as a helical span at residues 160–180 (LVSVFVWLLSLFLALPALLFS). At 181–208 (RDGPREGQRRCRLIFPESLTQTVKGASA) the chain is on the extracellular side. Residues 209 to 229 (VAQVVLGFALPLGVMAACYAL) traverse the membrane as a helical segment. Topologically, residues 230-247 (LGRTLLAARGPERRRALR) are cytoplasmic. The helical transmembrane segment at 248–268 (VVVALVVAFVVLQLPYSLALL) threads the bilayer. The Extracellular segment spans residues 269–291 (LDTADLLAARERSCSSSKRKDLA). The chain crosses the membrane as a helical span at residues 292 to 312 (LLVTGGLTLVRCSLNPVLYAF). Topologically, residues 313–362 (LGLRFRRDLRRLLQGGGCSPKPNPRGRCPRRLRLSSCSAPTETHSLSWDN) are cytoplasmic.

The protein belongs to the G-protein coupled receptor 1 family. In terms of tissue distribution, expressed at high levels in small intestine, colon, lymph nodes, Peyer patches and at lower levels in thymus, lung and spleen.

The protein localises to the cell membrane. Functionally, receptor for chemokines SCYA27 and SCYA28. Subsequently transduces a signal by increasing the intracellular calcium ions level. In Mus musculus (Mouse), this protein is C-C chemokine receptor type 10 (Ccr10).